We begin with the raw amino-acid sequence, 397 residues long: Cysteine desulfurase IscS (397 aa).

Pyridoxal 5'-phosphate contacts are provided by residues 72–73, Asn152, Gln180, and 200–202; these read GS and SAH. At Lys203 the chain carries N6-(pyridoxal phosphate)lysine. Residue Thr238 coordinates pyridoxal 5'-phosphate. Cys328 functions as the Cysteine persulfide intermediate in the catalytic mechanism. A [2Fe-2S] cluster-binding site is contributed by Cys328.

This sequence belongs to the class-V pyridoxal-phosphate-dependent aminotransferase family. NifS/IscS subfamily. As to quaternary structure, homodimer. Forms a heterotetramer with IscU, interacts with other sulfur acceptors. It depends on pyridoxal 5'-phosphate as a cofactor.

Its subcellular location is the cytoplasm. It carries out the reaction (sulfur carrier)-H + L-cysteine = (sulfur carrier)-SH + L-alanine. Its pathway is cofactor biosynthesis; iron-sulfur cluster biosynthesis. Master enzyme that delivers sulfur to a number of partners involved in Fe-S cluster assembly, tRNA modification or cofactor biosynthesis. Catalyzes the removal of elemental sulfur atoms from cysteine to produce alanine. Functions as a sulfur delivery protein for Fe-S cluster synthesis onto IscU, an Fe-S scaffold assembly protein, as well as other S acceptor proteins. This chain is Cysteine desulfurase IscS, found in Clostridium botulinum (strain Kyoto / Type A2).